The sequence spans 194 residues: WASH complex subunit 3 (194 aa).

Met1 carries the N-acetylmethionine modification. A coiled-coil region spans residues 46 to 74 (TVCEEKLADLSLRIQQIETTLNILDAKLS). Residues 98–123 (THSEATSEQSQQNSLQDSGPQESEVT) are compositionally biased toward polar residues. 2 disordered regions span residues 98–125 (THSE…VTPE) and 158–194 (SEGL…SFSD).

It belongs to the CCDC53 family. As to quaternary structure, component of the WASH core complex also described as WASH regulatory complex (SHRC) composed of WASHC1, WASHC2, WASHC3, WASHC4 and WASHC5. The WASH core complex associates via WASHC2 with the F-actin-capping protein dimer (formed by CAPZA1, CAPZA2 or CAPZA3 and CAPZB) in a transient or substoichiometric manner which was initially described as WASH complex.

It localises to the early endosome. Acts as a component of the WASH core complex that functions as a nucleation-promoting factor (NPF) at the surface of endosomes, where it recruits and activates the Arp2/3 complex to induce actin polymerization, playing a key role in the fission of tubules that serve as transport intermediates during endosome sorting. The chain is WASH complex subunit 3 from Bos taurus (Bovine).